The sequence spans 223 residues: Putative nudix hydrolase 2 (223 aa).

The Nudix hydrolase domain maps to 72–213 (ASADGVSIIA…SIVVESTLLA (142 aa)). The short motif at 111-132 (GLIDAGETAQQAAIRELKEETG) is the Nudix box element. Mg(2+)-binding residues include glutamate 126 and glutamate 130.

Belongs to the Nudix hydrolase family. Mg(2+) serves as cofactor. It depends on Mn(2+) as a cofactor.

In terms of biological role, probably mediates the hydrolysis of some nucleoside diphosphate derivatives. This is Putative nudix hydrolase 2 (ndx-2) from Caenorhabditis elegans.